A 448-amino-acid chain; its full sequence is Glutamate--tRNA ligase 1 (448 aa).

A 'HIGH' region motif is present at residues 9–19 (PSPTGKLHIGN). Positions 240-244 (KISKR) match the 'KMSKS' region motif. An ATP-binding site is contributed by Lys243.

This sequence belongs to the class-I aminoacyl-tRNA synthetase family. Glutamate--tRNA ligase type 1 subfamily. Monomer.

It localises to the cytoplasm. It catalyses the reaction tRNA(Glu) + L-glutamate + ATP = L-glutamyl-tRNA(Glu) + AMP + diphosphate. Catalyzes the attachment of glutamate to tRNA(Glu) in a two-step reaction: glutamate is first activated by ATP to form Glu-AMP and then transferred to the acceptor end of tRNA(Glu). In Orientia tsutsugamushi (strain Ikeda) (Rickettsia tsutsugamushi), this protein is Glutamate--tRNA ligase 1.